The chain runs to 78 residues: Large ribosomal subunit protein uL10 (78 aa).

Low complexity predominate over residues 40–50; it reads AAAAAATAPAA. Positions 40-78 are disordered; the sequence is AAAAAATAPAAETKKEEKKEEKKEETEESDDDIGLSLFH. A compositionally biased stretch (basic and acidic residues) spans 51 to 64; sequence ETKKEEKKEEKKEE.

Belongs to the universal ribosomal protein uL10 family. P0 forms a pentameric complex by interaction with dimers of P1 and P2.

The protein resides in the nucleus. Its subcellular location is the cytoplasm. Its function is as follows. Ribosomal protein P0 is the functional equivalent of E.coli protein L10. This chain is Large ribosomal subunit protein uL10, found in Culicoides nubeculosus (Biting midge).